Here is a 453-residue protein sequence, read N- to C-terminus: Nuclear distribution protein PAC1 (453 aa).

The 33-residue stretch at 19-51 (QKDELHKSILDYFKTNNLHESFATLMREANQEG) folds into the LisH domain. Residues 69–96 (TSVIRLQKKIMEMESRISQLQEELSAAP) are a coiled coil. WD repeat units follow at residues 120-161 (GHRL…RTLK), 162-201 (GHTK…KNIK), 205-244 (GHDH…CTKT), 247-286 (GHAE…TKVE), 314-355 (LDPN…KTLT), 356-395 (GHDN…CTRT), and 413-452 (IEAP…KIWT).

Belongs to the WD repeat LIS1/nudF family. In terms of assembly, self-associates. Interacts with NDL1 and dynein.

It localises to the cytoplasm. The protein resides in the cytoskeleton. The protein localises to the spindle pole. Positively regulates the activity of the minus-end directed microtubule motor protein dynein. May enhance dynein-mediated microtubule sliding by targeting dynein to the microtubule plus end. Required for nuclear migration during vegetative growth as well as development. Required for localization of dynein to the mitotic spindle poles. Recruits additional proteins to the dynein complex at SPBs. Required for retrograde early endosome (EE) transport from the hyphal tip. This chain is Nuclear distribution protein PAC1, found in Mycosarcoma maydis (Corn smut fungus).